A 110-amino-acid chain; its full sequence is Antimicrobial peptide microplusin (110 aa).

The first 20 residues, Met-1 to Ala-20, serve as a signal peptide directing secretion. 3 disulfides stabilise this stretch: Cys-26-Cys-72, Cys-39-Cys-100, and Cys-61-Cys-66.

In terms of tissue distribution, expressed in the hemocytes, fat body and ovaries.

The protein localises to the secreted. In terms of biological role, has bacteriostatic activity against the Gram-positive bacterium M.luteus, but not against Gram-negative bacterium E.coli SBS363. Has fungistatic activity against C.neoformans, but not C.albicans. Binds and sequesters copper and iron ions. Copper-chelating is crucial for antimicrobial activity against M.luteus. In Rhipicephalus microplus (Cattle tick), this protein is Antimicrobial peptide microplusin.